The chain runs to 409 residues: Wadjet protein JetD (409 aa).

Component of antiplasmid transformation system Wadjet type I, composed of JetA, JetB, JetC and JetD. Expression of Wadjet type I in B.subtilis (strain BEST7003) reduces the transformation efficiency of plasmid pHCMC05. The protein is Wadjet protein JetD of Bacillus cereus (strain Q1).